Consider the following 463-residue polypeptide: L-seryl-tRNA(Sec) selenium transferase (463 aa).

Lysine 295 is modified (N6-(pyridoxal phosphate)lysine).

Belongs to the SelA family. As to quaternary structure, homodecamer; pentamer of dimers. Binds only one seryl-tRNA(Sec) per dimer. Requires pyridoxal 5'-phosphate as cofactor.

The protein resides in the cytoplasm. The catalysed reaction is L-seryl-tRNA(Sec) + selenophosphate + H(+) = L-selenocysteinyl-tRNA(Sec) + phosphate. It functions in the pathway aminoacyl-tRNA biosynthesis; selenocysteinyl-tRNA(Sec) biosynthesis; selenocysteinyl-tRNA(Sec) from L-seryl-tRNA(Sec) (bacterial route): step 1/1. Converts seryl-tRNA(Sec) to selenocysteinyl-tRNA(Sec) required for selenoprotein biosynthesis. In Serratia proteamaculans (strain 568), this protein is L-seryl-tRNA(Sec) selenium transferase.